The following is a 906-amino-acid chain: Translation initiation factor IF-2 (906 aa).

Disordered stretches follow at residues 134 to 250 (RQRN…GSHV) and 269 to 317 (HLSA…FERP). The segment covering 136–177 (RNLDEQQRLAESDRVRDEEIQRKRDEEQAAKDRAEAERKAAE) has biased composition (basic and acidic residues). 2 stretches are compositionally biased toward low complexity: residues 178–232 (EAAA…STPA) and 287–305 (GRPG…RGSN). A tr-type G domain is found at 405–574 (TRPPVVTIMG…SLQAEVLELK (170 aa)). Positions 414–421 (GHVDHGKT) are G1. 414–421 (GHVDHGKT) is a binding site for GTP. The interval 439-443 (GITQH) is G2. Residues 460–463 (DTPG) are G3. GTP-binding positions include 460-464 (DTPGH) and 514-517 (NKID). The interval 514-517 (NKID) is G4. The G5 stretch occupies residues 550 to 552 (SAK).

It belongs to the TRAFAC class translation factor GTPase superfamily. Classic translation factor GTPase family. IF-2 subfamily.

It localises to the cytoplasm. Functionally, one of the essential components for the initiation of protein synthesis. Protects formylmethionyl-tRNA from spontaneous hydrolysis and promotes its binding to the 30S ribosomal subunits. Also involved in the hydrolysis of GTP during the formation of the 70S ribosomal complex. In Xanthomonas oryzae pv. oryzae (strain MAFF 311018), this protein is Translation initiation factor IF-2.